The sequence spans 232 residues: uncharacterized protein (232 aa).

This is an uncharacterized protein from Acanthamoeba polyphaga (Amoeba).